A 466-amino-acid chain; its full sequence is Ribulose bisphosphate carboxylase large chain (466 aa).

Position 5 is an N6,N6,N6-trimethyllysine (Lys5). Asn114 and Thr164 together coordinate substrate. The Proton acceptor role is filled by Lys166. Residue Lys168 participates in substrate binding. Mg(2+) is bound by residues Lys192, Asp194, and Glu195. At Lys192 the chain carries N6-carboxylysine. The active-site Proton acceptor is His285. Residues Arg286, His318, and Ser370 each contribute to the substrate site.

It belongs to the RuBisCO large chain family. Type I subfamily. Heterohexadecamer of 8 large chains and 8 small chains; disulfide-linked. The disulfide link is formed within the large subunit homodimers. Requires Mg(2+) as cofactor. The disulfide bond which can form in the large chain dimeric partners within the hexadecamer appears to be associated with oxidative stress and protein turnover.

It is found in the plastid. The protein localises to the chloroplast. It catalyses the reaction 2 (2R)-3-phosphoglycerate + 2 H(+) = D-ribulose 1,5-bisphosphate + CO2 + H2O. The catalysed reaction is D-ribulose 1,5-bisphosphate + O2 = 2-phosphoglycolate + (2R)-3-phosphoglycerate + 2 H(+). Functionally, ruBisCO catalyzes two reactions: the carboxylation of D-ribulose 1,5-bisphosphate, the primary event in carbon dioxide fixation, as well as the oxidative fragmentation of the pentose substrate in the photorespiration process. Both reactions occur simultaneously and in competition at the same active site. The polypeptide is Ribulose bisphosphate carboxylase large chain (Oxalis dillenii (Gray-green wood sorrel)).